We begin with the raw amino-acid sequence, 119 residues long: Large ribosomal subunit protein uL22c (119 aa).

Belongs to the universal ribosomal protein uL22 family. In terms of assembly, part of the 50S ribosomal subunit.

It localises to the plastid. It is found in the chloroplast. In terms of biological role, this protein binds specifically to 23S rRNA. Its function is as follows. The globular domain of the protein is located near the polypeptide exit tunnel on the outside of the subunit, while an extended beta-hairpin is found that lines the wall of the exit tunnel in the center of the 70S ribosome. The chain is Large ribosomal subunit protein uL22c (rpl22) from Mesostigma viride (Green alga).